The following is a 246-amino-acid chain: MASLLSSSLPSCLPSLLFLLLQLTSSSAGQFRVIGPGHPIRALVGDEVELPCRISPGKNATGMEVGWYRPPFSRVVHLYRNGKDQDEEQAPEYRGRTQLLKETIGEGKVTLRIRNVRFSDEGGFTCFFRDHSYQEEAAMELKVEDPFYWINPGVLVLIAVLPVLLLQITVGLVFLCLQRRLRGKLWAEIENLHRTFDPHFLMVPCWKITLFVIVPVLGPLVALIICYNWLHRRLAGQFLEELRNPF.

An N-terminal signal peptide occupies residues 1-28 (MASLLSSSLPSCLPSLLFLLLQLTSSSA). An Ig-like V-type domain is found at 29–144 (GQFRVIGPGH…EEAAMELKVE (116 aa)). Residues 29–153 (GQFRVIGPGH…EDPFYWINPG (125 aa)) are Extracellular-facing. Residues Cys52 and Cys126 are joined by a disulfide bond. An N-linked (GlcNAc...) asparagine glycan is attached at Asn59. A helical transmembrane segment spans residues 154-174 (VLVLIAVLPVLLLQITVGLVF). At 175–209 (LCLQRRLRGKLWAEIENLHRTFDPHFLMVPCWKIT) the chain is on the cytoplasmic side. Residues 210 to 230 (LFVIVPVLGPLVALIICYNWL) form a helical membrane-spanning segment. Residues 231 to 246 (HRRLAGQFLEELRNPF) are Extracellular-facing.

It belongs to the immunoglobulin superfamily. BTN/MOG family. Homodimer. As to expression, found exclusively in the CNS, where it is localized on the surface of myelin and oligodendrocyte cytoplasmic membranes.

Its subcellular location is the membrane. Functionally, mediates homophilic cell-cell adhesion. Minor component of the myelin sheath. May be involved in completion and/or maintenance of the myelin sheath and in cell-cell communication. This Bos taurus (Bovine) protein is Myelin-oligodendrocyte glycoprotein (MOG).